Here is a 274-residue protein sequence, read N- to C-terminus: Large ribosomal subunit protein uL2 (274 aa).

The segment at 224–274 (VAMNPVDHPHGGGEGRTSGGRHPVTPWGIPTKGYKTRRNKRSNKLIVQKRK) is disordered. Residues 257–274 (YKTRRNKRSNKLIVQKRK) show a composition bias toward basic residues.

It belongs to the universal ribosomal protein uL2 family. In terms of assembly, part of the 50S ribosomal subunit. Forms a bridge to the 30S subunit in the 70S ribosome.

One of the primary rRNA binding proteins. Required for association of the 30S and 50S subunits to form the 70S ribosome, for tRNA binding and peptide bond formation. It has been suggested to have peptidyltransferase activity; this is somewhat controversial. Makes several contacts with the 16S rRNA in the 70S ribosome. This is Large ribosomal subunit protein uL2 from Francisella tularensis subsp. mediasiatica (strain FSC147).